The primary structure comprises 188 residues: Pro-FMRFamide-related neuropeptide VF (188 aa).

An N-terminal signal peptide occupies residues 1-26 (MEIISLKRFILLTVATSSFLTSNTFC). A propeptide spanning residues 27–57 (TDEFMMPHFHSKEGDGKYSQLRGIPKGEKER) is cleaved from the precursor. Position 94 is a phenylalanine amide (F94). A propeptide spanning residues 97-106 (TIDEKRSPAA) is cleaved from the precursor. Disordered regions lie at residues 116-144 (SHFPSLPQRFGRTTARSPKTPADLPQKPL) and 163-188 (IQSPGGKRTRRGAFVETDDAERKPEK). F125 carries the phenylalanine amide modification. The propeptide occupies 128 to 188 (TTARSPKTPA…TDDAERKPEK (61 aa)).

Belongs to the FARP (FMRFamide related peptide) family.

It is found in the secreted. In terms of biological role, efficiently inhibits forskolin-induced production of cAMP. Acts as a potent negative regulator of gonadotropin synthesis and secretion. Induces secretion of prolactin. Its function is as follows. Efficiently inhibits forskolin-induced production of cAMP. Blocks morphine-induced analgesia. The protein is Pro-FMRFamide-related neuropeptide VF (Npvf) of Mus musculus (Mouse).